Reading from the N-terminus, the 253-residue chain is Phosphate import ATP-binding protein PstB (253 aa).

Positions 7–248 (IEVEDLNVYF…PRDKRTEDYI (242 aa)) constitute an ABC transporter domain. 39 to 46 (GPSGCGKS) serves as a coordination point for ATP.

This sequence belongs to the ABC transporter superfamily. Phosphate importer (TC 3.A.1.7) family. As to quaternary structure, the complex is composed of two ATP-binding proteins (PstB), two transmembrane proteins (PstC and PstA) and a solute-binding protein (PstS).

Its subcellular location is the cell membrane. The enzyme catalyses phosphate(out) + ATP + H2O = ADP + 2 phosphate(in) + H(+). In terms of biological role, part of the ABC transporter complex PstSACB involved in phosphate import. Responsible for energy coupling to the transport system. This chain is Phosphate import ATP-binding protein PstB, found in Methanothermobacter thermautotrophicus (strain ATCC 29096 / DSM 1053 / JCM 10044 / NBRC 100330 / Delta H) (Methanobacterium thermoautotrophicum).